Here is a 191-residue protein sequence, read N- to C-terminus: Gene BABR protein 1 (191 aa).

The sequence is that of Gene BABR protein 1 from Babesia bovis.